Consider the following 143-residue polypeptide: Transmembrane protein 207 (143 aa).

An N-terminal signal peptide occupies residues 1–29 (MSTSSPFRVASKIVTAGCLCLPLFQRVLS). Residues 52–72 (IWFFLLIFLVVLLCGVVLFCL) form a helical membrane-spanning segment.

In terms of assembly, interacts with WWOX.

It localises to the membrane. The polypeptide is Transmembrane protein 207 (Mus musculus (Mouse)).